A 597-amino-acid chain; its full sequence is uncharacterized protein (597 aa).

5 consecutive transmembrane segments (helical) span residues 37-57, 67-87, 109-129, 134-154, and 162-182; these read VLII…LWPV, IFWL…LQFA, GGER…YAAI, SVSL…FIAW, and ALMT…LAIV. Residues 393–597 enclose the Histidine kinase domain; that stretch reads HQLARDLHDG…QITIFVPIES (205 aa).

The protein resides in the cell membrane. This is an uncharacterized protein from Chloroflexus aurantiacus (strain ATCC 29366 / DSM 635 / J-10-fl).